The following is a 167-amino-acid chain: NAD(P)H-quinone oxidoreductase subunit I, chloroplastic (167 aa).

4Fe-4S ferredoxin-type domains lie at 55-84 (GRIHFEFDKCIACEVCVRVCPIDLPVVDWK) and 95-124 (LNYSIDFGICIFCGNCVEYCPTNCLSMTEE). [4Fe-4S] cluster contacts are provided by Cys64, Cys67, Cys70, Cys74, Cys104, Cys107, Cys110, and Cys114.

It belongs to the complex I 23 kDa subunit family. As to quaternary structure, NDH is composed of at least 16 different subunits, 5 of which are encoded in the nucleus. [4Fe-4S] cluster is required as a cofactor.

The protein resides in the plastid. It is found in the chloroplast thylakoid membrane. The enzyme catalyses a plastoquinone + NADH + (n+1) H(+)(in) = a plastoquinol + NAD(+) + n H(+)(out). It catalyses the reaction a plastoquinone + NADPH + (n+1) H(+)(in) = a plastoquinol + NADP(+) + n H(+)(out). Functionally, NDH shuttles electrons from NAD(P)H:plastoquinone, via FMN and iron-sulfur (Fe-S) centers, to quinones in the photosynthetic chain and possibly in a chloroplast respiratory chain. The immediate electron acceptor for the enzyme in this species is believed to be plastoquinone. Couples the redox reaction to proton translocation, and thus conserves the redox energy in a proton gradient. This chain is NAD(P)H-quinone oxidoreductase subunit I, chloroplastic, found in Aethionema cordifolium (Lebanon stonecress).